The sequence spans 411 residues: Serine--tRNA ligase (411 aa).

226–228 (TSE) serves as a coordination point for L-serine. Residue 257-259 (RKE) participates in ATP binding. L-serine is bound at residue Glu280. 344–347 (EISS) contributes to the ATP binding site. Ser379 provides a ligand contact to L-serine.

Belongs to the class-II aminoacyl-tRNA synthetase family. Type-1 seryl-tRNA synthetase subfamily. Homodimer. The tRNA molecule binds across the dimer.

It localises to the cytoplasm. The enzyme catalyses tRNA(Ser) + L-serine + ATP = L-seryl-tRNA(Ser) + AMP + diphosphate + H(+). It carries out the reaction tRNA(Sec) + L-serine + ATP = L-seryl-tRNA(Sec) + AMP + diphosphate + H(+). It participates in aminoacyl-tRNA biosynthesis; selenocysteinyl-tRNA(Sec) biosynthesis; L-seryl-tRNA(Sec) from L-serine and tRNA(Sec): step 1/1. In terms of biological role, catalyzes the attachment of serine to tRNA(Ser). Is also able to aminoacylate tRNA(Sec) with serine, to form the misacylated tRNA L-seryl-tRNA(Sec), which will be further converted into selenocysteinyl-tRNA(Sec). The polypeptide is Serine--tRNA ligase (Campylobacter jejuni subsp. jejuni serotype O:6 (strain 81116 / NCTC 11828)).